Consider the following 425-residue polypeptide: RNA polymerase sigma factor SigA (425 aa).

The tract at residues 193 to 263 is sigma-70 factor domain-2; sequence MVQSNLRLVV…TRAIADQSRT (71 aa). The Interaction with polymerase core subunit RpoC signature appears at 217–220; it reads DLIQ. Residues 272-347 form a sigma-70 factor domain-3 region; sequence ETISRIKKTT…EADGETPEDE (76 aa). The segment at 360–413 is sigma-70 factor domain-4; that stretch reads VLDTLSPRERDVLRLRYGLDDGRMKTLEEIGQIFNVTRERIRQIEAKALRKLRH. A DNA-binding region (H-T-H motif) is located at residues 386-405; sequence LEEIGQIFNVTRERIRQIEA.

It belongs to the sigma-70 factor family. RpoD/SigA subfamily. Interacts transiently with the RNA polymerase catalytic core.

Its subcellular location is the cytoplasm. Functionally, sigma factors are initiation factors that promote the attachment of RNA polymerase to specific initiation sites and are then released. This sigma factor is the primary sigma factor during exponential growth. The protein is RNA polymerase sigma factor SigA of Synechocystis sp. (strain ATCC 27184 / PCC 6803 / Kazusa).